The following is a 461-amino-acid chain: tRNA modification GTPase MnmE (461 aa).

(6S)-5-formyl-5,6,7,8-tetrahydrofolate contacts are provided by lysine 32, glutamate 89, and lysine 128. Residues 224 to 387 form the TrmE-type G domain; it reads GHALSIVGKP…LSQKISAFFP (164 aa). Asparagine 234 is a binding site for K(+). GTP is bound by residues 234 to 239, 253 to 259, and 278 to 281; these read NAGKSS, SDIKGTT, and DTAG. Serine 238 is a Mg(2+) binding site. Serine 253, isoleucine 255, and threonine 258 together coordinate K(+). Residue threonine 259 coordinates Mg(2+). Lysine 461 contributes to the (6S)-5-formyl-5,6,7,8-tetrahydrofolate binding site.

The protein belongs to the TRAFAC class TrmE-Era-EngA-EngB-Septin-like GTPase superfamily. TrmE GTPase family. Homodimer. Heterotetramer of two MnmE and two MnmG subunits. K(+) serves as cofactor.

It localises to the cytoplasm. In terms of biological role, exhibits a very high intrinsic GTPase hydrolysis rate. Involved in the addition of a carboxymethylaminomethyl (cmnm) group at the wobble position (U34) of certain tRNAs, forming tRNA-cmnm(5)s(2)U34. In Helicobacter pylori (strain ATCC 700392 / 26695) (Campylobacter pylori), this protein is tRNA modification GTPase MnmE.